The chain runs to 473 residues: Cysteine--tRNA ligase (473 aa).

C28 provides a ligand contact to Zn(2+). Residues 30–40 carry the 'HIGH' region motif; it reads MTVYDYCHLGH. 3 residues coordinate Zn(2+): C209, H234, and E238. The 'KMSKS' region motif lies at 282–286; the sequence is KMSKS. K285 contacts ATP.

Belongs to the class-I aminoacyl-tRNA synthetase family. In terms of assembly, monomer. The cofactor is Zn(2+).

Its subcellular location is the cytoplasm. The catalysed reaction is tRNA(Cys) + L-cysteine + ATP = L-cysteinyl-tRNA(Cys) + AMP + diphosphate. The polypeptide is Cysteine--tRNA ligase (Neisseria gonorrhoeae (strain ATCC 700825 / FA 1090)).